A 264-amino-acid chain; its full sequence is Adenosylcobinamide-GDP ribazoletransferase (264 aa).

7 helical membrane passes run 10 to 30, 43 to 63, 113 to 133, 141 to 161, 183 to 203, 205 to 225, and 243 to 263; these read LFFI…VGYT, LVGA…AQVW, LGSY…VALY, VQAL…PVAL, VSDA…AAAW, LGAS…LAAF, and GAAQ…GVWF.

It belongs to the CobS family. It depends on Mg(2+) as a cofactor.

It localises to the cell inner membrane. The catalysed reaction is alpha-ribazole + adenosylcob(III)inamide-GDP = adenosylcob(III)alamin + GMP + H(+). It catalyses the reaction alpha-ribazole 5'-phosphate + adenosylcob(III)inamide-GDP = adenosylcob(III)alamin 5'-phosphate + GMP + H(+). Its pathway is cofactor biosynthesis; adenosylcobalamin biosynthesis; adenosylcobalamin from cob(II)yrinate a,c-diamide: step 7/7. Joins adenosylcobinamide-GDP and alpha-ribazole to generate adenosylcobalamin (Ado-cobalamin). Also synthesizes adenosylcobalamin 5'-phosphate from adenosylcobinamide-GDP and alpha-ribazole 5'-phosphate. This chain is Adenosylcobinamide-GDP ribazoletransferase, found in Leptothrix cholodnii (strain ATCC 51168 / LMG 8142 / SP-6) (Leptothrix discophora (strain SP-6)).